The sequence spans 144 residues: Large ribosomal subunit protein uL11 (144 aa).

This sequence belongs to the universal ribosomal protein uL11 family. Part of the ribosomal stalk of the 50S ribosomal subunit. Interacts with L10 and the large rRNA to form the base of the stalk. L10 forms an elongated spine to which L12 dimers bind in a sequential fashion forming a multimeric L10(L12)X complex. One or more lysine residues are methylated.

Functionally, forms part of the ribosomal stalk which helps the ribosome interact with GTP-bound translation factors. This Marinomonas sp. (strain MWYL1) protein is Large ribosomal subunit protein uL11.